A 148-amino-acid chain; its full sequence is Respiratory supercomplex factor 1, mitochondrial (148 aa).

An HIG1 domain is found at 9–100 (LPSSFDAHPE…QERKQRKEFE (92 aa)). Transmembrane regions (helical) follow at residues 36–53 (PLIP…WRAY) and 72–89 (IYGH…GIYY). The stretch at 89–148 (YGQERKQRKEFEKALQEKQDQEKRDAWLRELEVRDKEDKDWRQRHAAMEMAAKEAEKKMG) forms a coiled coil.

It belongs to the RCF1 family. As to quaternary structure, associates with the respiratory chain complex III/complex IV supercomplex.

The protein resides in the mitochondrion membrane. Cytochrome c oxidase subunit which plays a role in assembly of respiratory supercomplexes. This Ajellomyces dermatitidis (strain ER-3 / ATCC MYA-2586) (Blastomyces dermatitidis) protein is Respiratory supercomplex factor 1, mitochondrial (RCF1).